The sequence spans 557 residues: Tripeptidyl-peptidase 1 (557 aa).

The first 16 residues, 1-16 (MRVAVFVLSFIWLVNG), serve as a signal peptide directing secretion. A propeptide spans 17–190 (ELLEADQDAV…WEGARQAILG (174 aa)) (removed in mature form). N-linked (GlcNAc...) asparagine glycosylation is present at Asn53. Cys107 and Cys118 form a disulfide bridge. One can recognise a Peptidase S53 domain in the interval 194–557 (GVTPAVIRNR…YPVFLASLMD (364 aa)). Residues Asn205 and Asn216 are each glycosylated (N-linked (GlcNAc...) asparagine). Active-site charge relay system residues include Glu266 and Asp270. 3 N-linked (GlcNAc...) asparagine glycosylation sites follow: Asn280, Asn307, and Asn438. 2 disulfides stabilise this stretch: Cys359-Cys521 and Cys517-Cys532. Residue Ser470 is the Charge relay system of the active site. Asp512 and Val513 together coordinate Ca(2+). Asp538 is a binding site for Ca(2+).

The cofactor is Ca(2+). Activated by autocatalytic proteolytical processing.

It is found in the lysosome. The enzyme catalyses Release of an N-terminal tripeptide from a polypeptide, but also has endopeptidase activity.. Its function is as follows. Lysosomal serine protease with tripeptidyl-peptidase I activity. May act as a non-specific lysosomal peptidase which generates tripeptides from the breakdown products produced by lysosomal proteinases. Requires substrates with an unsubstituted N-terminus. The chain is Tripeptidyl-peptidase 1 from Danio rerio (Zebrafish).